The following is a 256-amino-acid chain: UPF0246 protein Swoo_1284 (256 aa).

The protein belongs to the UPF0246 family.

In Shewanella woodyi (strain ATCC 51908 / MS32), this protein is UPF0246 protein Swoo_1284.